Here is a 198-residue protein sequence, read N- to C-terminus: NAD(P)H dehydrogenase (quinone) (198 aa).

In terms of domain architecture, Flavodoxin-like spans 4–189; the sequence is ILVLYYSMYG…SIARYQGEYV (186 aa). FMN contacts are provided by residues 10–15 and 78–80; these read SMYGHI and TRF. Tyr-12 contributes to the NAD(+) binding site. Substrate is bound at residue Trp-98. Residues 113-118 and His-133 each bind FMN; that span reads STGTGG.

Belongs to the WrbA family. FMN serves as cofactor.

The enzyme catalyses a quinone + NADH + H(+) = a quinol + NAD(+). It catalyses the reaction a quinone + NADPH + H(+) = a quinol + NADP(+). The sequence is that of NAD(P)H dehydrogenase (quinone) from Salmonella paratyphi C (strain RKS4594).